The following is a 55-amino-acid chain: Large ribosomal subunit protein bL33 (55 aa).

The protein belongs to the bacterial ribosomal protein bL33 family.

The protein is Large ribosomal subunit protein bL33 of Allorhizobium ampelinum (strain ATCC BAA-846 / DSM 112012 / S4) (Agrobacterium vitis (strain S4)).